The sequence spans 137 residues: ATP synthase epsilon chain, chloroplastic (137 aa).

The protein belongs to the ATPase epsilon chain family. As to quaternary structure, F-type ATPases have 2 components, CF(1) - the catalytic core - and CF(0) - the membrane proton channel. CF(1) has five subunits: alpha(3), beta(3), gamma(1), delta(1), epsilon(1). CF(0) has three main subunits: a, b and c.

It localises to the plastid. Its subcellular location is the chloroplast thylakoid membrane. Functionally, produces ATP from ADP in the presence of a proton gradient across the membrane. The polypeptide is ATP synthase epsilon chain, chloroplastic (Bigelowiella natans (Pedinomonas minutissima)).